Reading from the N-terminus, the 491-residue chain is Dipeptide and tripeptide permease B (491 aa).

The Cytoplasmic segment spans residues 1-26 (MNNTAPGLLHQPKPFFMIFFVELWER). Residues 27–47 (FGYYGVQGILAVFFVKQLGFS) form a helical membrane-spanning segment. Topologically, residues 48 to 51 (QEQA) are periplasmic. Residues 52–72 (FITFGAFAALVYGLISIGGYV) traverse the membrane as a helical segment. Residues 73 to 81 (GDHLLGTKR) lie on the Cytoplasmic side of the membrane. The helical transmembrane segment at 82–102 (TMVLGAIVLALGYFMTGMSLL) threads the bilayer. The Periplasmic segment spans residues 103 to 105 (KPE). A helical membrane pass occupies residues 106–126 (MIFIALGTIAVGNGLFKANPA). Residues 127–145 (SLLSKCYPPKDPRLDGAFT) are Cytoplasmic-facing. The helical transmembrane segment at 146 to 166 (LFYMSINIGSLLSLSLAPIIA) threads the bilayer. At 167–171 (ERFGY) the chain is on the periplasmic side. The helical transmembrane segment at 172–192 (AVTYNLCGLGLIIALLVYFAC) threads the bilayer. The Cytoplasmic portion of the chain corresponds to 193 to 210 (RGMVRSIGSAPDHQPLNY). Residues 211 to 231 (GKLLLVLAGAVVMIFLCAWLM) form a helical membrane-spanning segment. A topological domain (periplasmic) is located at residue His-232. The helical transmembrane segment at 233–253 (NVGVANIVLIAVSAVVLYFFF) threads the bilayer. The Cytoplasmic portion of the chain corresponds to 254-266 (REAFKQDKTGRNR). Residues 267–287 (MFVAFILMIEAVLFYILYAQM) traverse the membrane as a helical segment. Residues 288 to 312 (PTSLNFFAINNVRHELLGFAINPVS) lie on the Periplasmic side of the membrane. The chain crosses the membrane as a helical span at residues 313-335 (FQALNPFWVVVASPILASIYTRL). Topologically, residues 336–349 (GSRGRDMTMPTKFT) are cytoplasmic. The chain crosses the membrane as a helical span at residues 350–370 (LGMLLCSLGFLTAAAAGMWFA). The Periplasmic segment spans residues 371–378 (DAQGLTSP). A helical transmembrane segment spans residues 379 to 399 (WFVVLVYLFQSLGELMISALG). Residues 400 to 423 (LAMVAALVPQYLMGFILGMWFLTQ) lie on the Cytoplasmic side of the membrane. The helical transmembrane segment at 424-444 (AAAFLLGGYVATFTAVPAGIH) threads the bilayer. At 445-454 (DPLQTLPIYT) the chain is on the periplasmic side. Residues 455–475 (GVFGKIGIATLIVTLVMAAMV) form a helical membrane-spanning segment. The Cytoplasmic portion of the chain corresponds to 476–491 (PWLNRMMNTPADGQKA).

Belongs to the major facilitator superfamily. Proton-dependent oligopeptide transporter (POT/PTR) (TC 2.A.17) family. DtpB subfamily.

It localises to the cell inner membrane. Proton-dependent permease that transports di- and tripeptides. In Edwardsiella piscicida, this protein is Dipeptide and tripeptide permease B.